We begin with the raw amino-acid sequence, 331 residues long: D-alanine--D-alanine ligase (331 aa).

Residues 122–328 (KLWYDAIGIP…FHEFLADCIE (207 aa)) form the ATP-grasp domain. An ATP-binding site is contributed by 152–207 (AFDKWGKLFVKAARQGSSVGCYSVTNIEQLSDAIDKAFGFSHQVLVEKAVKPRELE). Residues Asp282, Glu295, and Asn297 each contribute to the Mg(2+) site.

The protein belongs to the D-alanine--D-alanine ligase family. Mg(2+) serves as cofactor. It depends on Mn(2+) as a cofactor.

The protein resides in the cytoplasm. The enzyme catalyses 2 D-alanine + ATP = D-alanyl-D-alanine + ADP + phosphate + H(+). It participates in cell wall biogenesis; peptidoglycan biosynthesis. Its function is as follows. Cell wall formation. The sequence is that of D-alanine--D-alanine ligase from Vibrio vulnificus (strain YJ016).